A 368-amino-acid chain; its full sequence is Histone macroH2A1.1 (368 aa).

The interval 154–177 is disordered; it reads AVSSSSAAASSSSSASSSSSVAPK. The region spanning 184 to 368 is the Macro domain; the sequence is TILSKKTLHL…VYNAELINTN (185 aa). The a glycoprotein site is built by D203, L204, Q225, V226, S275, G313, S314, G315, N316, and N317.

Belongs to the histone H2A family. In terms of assembly, the nucleosome is a histone octamer containing two molecules each of H2A, H2B, H3 and H4 assembled in one H3-H4 heterotetramer and two H2A-H2B heterodimers.

It localises to the nucleus. The protein localises to the chromosome. Functionally, variant histone H2A which replaces conventional H2A in a subset of nucleosomes where it represses transcription. Nucleosomes wrap and compact DNA into chromatin, limiting DNA accessibility to the cellular machineries which require DNA as a template. Histones thereby play a central role in transcription regulation, DNA repair, DNA replication and chromosomal stability. DNA accessibility is regulated via a complex set of post-translational modifications of histones, also called histone code, and nucleosome remodeling. Its function is as follows. Specifically binds poly-ADP-ribose and plays a key role in NAD(+) metabolism. Able to bind to the ends of poly-ADP-ribose chains created by PARP1 and cap them. This prevents PARP1 from further addition of ADP-ribose and thus limits the consumption of nuclear NAD(+), allowing the cell to maintain proper NAD(+) levels in both the nucleus and the mitochondria to promote proper mitochondrial respiration. The protein is Histone macroH2A1.1 of Capsaspora owczarzaki (strain ATCC 30864).